A 406-amino-acid chain; its full sequence is Argininosuccinate synthase (406 aa).

Residues 11–19 (AYSGGLDTS) and Ala38 contribute to the ATP site. The L-citrulline site is built by Tyr91 and Ser96. An ATP-binding site is contributed by Gly121. Residues Thr123, Asn127, and Asp128 each coordinate L-aspartate. Asn127 is an L-citrulline binding site. Positions 131, 181, 190, 266, and 278 each coordinate L-citrulline.

The protein belongs to the argininosuccinate synthase family. Type 1 subfamily. As to quaternary structure, homotetramer.

The protein localises to the cytoplasm. It catalyses the reaction L-citrulline + L-aspartate + ATP = 2-(N(omega)-L-arginino)succinate + AMP + diphosphate + H(+). Its pathway is amino-acid biosynthesis; L-arginine biosynthesis; L-arginine from L-ornithine and carbamoyl phosphate: step 2/3. This Campylobacter curvus (strain 525.92) protein is Argininosuccinate synthase.